The primary structure comprises 191 residues: Repressor Rok (191 aa).

Positions 2–43 (FNEREALRLRLEQLNEAEVKVIREYQIERDKIYAKLRELDRN) form a coiled coil. Positions 75-96 (SYQPQSQQQSVQPQLQSISSLP) are enriched in low complexity. The segment at 75 to 116 (SYQPQSQQQSVQPQLQSISSLPAGIPDGTTRRRRGTARPGSK) is disordered. Positions 95–191 (LPAGIPDGTT…EIESAESANE (97 aa)) are DNA-binding.

Its subcellular location is the cytoplasm. The protein localises to the nucleoid. In terms of biological role, repressor of comK, the master regulator of competence development. Overexpression seems to be lethal. Represses at least 20 genes that specify membrane-localized and secreted proteins, including some that encode products with antibiotic activity. Binds to many AT-rich sites in the chromosome, many of which are known or thought to derive from horizontal gene transfer; helps keep mobile element ICEBs1 quiescent in the genome. Binds to its own promoter and is thus probably autoregulatory. This is Repressor Rok from Bacillus subtilis (strain 168).